Here is a 118-residue protein sequence, read N- to C-terminus: Beta-2-microglobulin (118 aa).

The first 20 residues, 1 to 20, serve as a signal peptide directing secretion; that stretch reads MARFVALVLLGLLSLSGLDA. The 88-residue stretch at 25 to 112 folds into the Ig-like C1-type domain; it reads PKIQVYSRHP…HVTLEQPRIV (88 aa). A disulfide bridge links Cys-45 with Cys-99.

This sequence belongs to the beta-2-microglobulin family. Heterodimer of an alpha chain and a beta chain. Beta-2-microglobulin is the beta-chain of major histocompatibility complex class I molecules. Forms a heterotrimer with MR1 and a metabolite antigen.

It localises to the secreted. Component of the class I major histocompatibility complex (MHC). Involved in the presentation of peptide antigens to the immune system. The polypeptide is Beta-2-microglobulin (B2M) (Bos taurus (Bovine)).